The chain runs to 193 residues: Ion-translocating oxidoreductase complex subunit A (193 aa).

A run of 6 helical transmembrane segments spans residues Leu-5–Leu-25, Phe-47–Leu-67, Leu-72–Val-92, Leu-102–Leu-122, Ala-134–Ile-154, and Ser-171–Val-191.

Belongs to the NqrDE/RnfAE family. The complex is composed of six subunits: RnfA, RnfB, RnfC, RnfD, RnfE and RnfG.

It is found in the cell inner membrane. Part of a membrane-bound complex that couples electron transfer with translocation of ions across the membrane. The polypeptide is Ion-translocating oxidoreductase complex subunit A (Serratia proteamaculans (strain 568)).